A 673-amino-acid chain; its full sequence is UvrABC system protein B (673 aa).

In terms of domain architecture, Helicase ATP-binding spans 26 to 183 (EGLEDGLAHQ…RRLAELQYAR (158 aa)). Residue 39–46 (GVTGSGKT) coordinates ATP. Residues 92 to 115 (YYDYYQPEAYVPSSDTFIEKDASV) carry the Beta-hairpin motif. Positions 431-597 (QVDDLLSEIR…GLNKKVVDIL (167 aa)) constitute a Helicase C-terminal domain. A UVR domain is found at 633–668 (QQKIHELEGLMMQHAQNLEFEEAAQVRDQLHQLRQL).

It belongs to the UvrB family. As to quaternary structure, forms a heterotetramer with UvrA during the search for lesions. Interacts with UvrC in an incision complex.

The protein resides in the cytoplasm. Its function is as follows. The UvrABC repair system catalyzes the recognition and processing of DNA lesions. A damage recognition complex composed of 2 UvrA and 2 UvrB subunits scans DNA for abnormalities. Upon binding of the UvrA(2)B(2) complex to a putative damaged site, the DNA wraps around one UvrB monomer. DNA wrap is dependent on ATP binding by UvrB and probably causes local melting of the DNA helix, facilitating insertion of UvrB beta-hairpin between the DNA strands. Then UvrB probes one DNA strand for the presence of a lesion. If a lesion is found the UvrA subunits dissociate and the UvrB-DNA preincision complex is formed. This complex is subsequently bound by UvrC and the second UvrB is released. If no lesion is found, the DNA wraps around the other UvrB subunit that will check the other stand for damage. The protein is UvrABC system protein B of Enterobacter sp. (strain 638).